A 341-amino-acid polypeptide reads, in one-letter code: S-adenosylmethionine:tRNA ribosyltransferase-isomerase (341 aa).

The protein belongs to the QueA family. In terms of assembly, monomer.

It localises to the cytoplasm. The catalysed reaction is 7-aminomethyl-7-carbaguanosine(34) in tRNA + S-adenosyl-L-methionine = epoxyqueuosine(34) in tRNA + adenine + L-methionine + 2 H(+). The protein operates within tRNA modification; tRNA-queuosine biosynthesis. Its function is as follows. Transfers and isomerizes the ribose moiety from AdoMet to the 7-aminomethyl group of 7-deazaguanine (preQ1-tRNA) to give epoxyqueuosine (oQ-tRNA). The polypeptide is S-adenosylmethionine:tRNA ribosyltransferase-isomerase (Alkaliphilus metalliredigens (strain QYMF)).